The chain runs to 960 residues: Pentatricopeptide repeat-containing protein At3g63370, chloroplastic (960 aa).

Residues methionine 1–leucine 64 constitute a chloroplast transit peptide. PPR repeat units follow at residues proline 79–threonine 109, leucine 115–arginine 145, threonine 146–leucine 180, glycine 181–serine 215, threonine 216–lysine 246, aspartate 248–proline 282, asparagine 283–serine 317, glutamate 319–alanine 349, aspartate 350–serine 384, aspartate 385–serine 419, asparagine 420–lysine 450, aspartate 451–isoleucine 485, aspartate 486–lysine 516, aspartate 520–lysine 550, aspartate 551–alanine 585, aspartate 586–leucine 620, glutamate 621–lysine 651, glycine 652–proline 686, aspartate 687–glutamate 717, and tryptophan 723–glutamate 753. Residues valine 758–aspartate 833 form a type E motif region. The type E(+) motif stretch occupies residues glycine 834–glutamate 864. A type DYW motif region spans residues arginine 865–tryptophan 960.

This sequence belongs to the PPR family. PCMP-H subfamily.

It localises to the plastid. It is found in the chloroplast. Involved in RNA editing event in chloroplasts. Required for the editing of a single site in rps14 transcript. The polypeptide is Pentatricopeptide repeat-containing protein At3g63370, chloroplastic (PCMP-H83) (Arabidopsis thaliana (Mouse-ear cress)).